The primary structure comprises 499 residues: Flotillin-like protein 2 (499 aa).

Cysteine 37 carries S-palmitoyl cysteine lipidation. Residues 243–319 adopt a coiled-coil conformation; it reads LREEAKVKAE…LRLTEKLKAE (77 aa).

The protein belongs to the band 7/mec-2 family. Flotillin subfamily. Post-translationally, may be palmitoylated.

It is found in the cell membrane. It localises to the membrane. Its subcellular location is the caveola. Its function is as follows. May act as a scaffolding protein within caveolar membranes, functionally participating in formation of caveolae or caveolae-like vesicles. The chain is Flotillin-like protein 2 (FLOT2) from Oryza sativa subsp. japonica (Rice).